The primary structure comprises 490 residues: Protein dead ringer homolog (490 aa).

Over residues Met1–Arg33 the composition is skewed to basic and acidic residues. Disordered stretches follow at residues Met1–Asp77 and Ile106–Ser135. A compositionally biased stretch (acidic residues) spans Asp34–Glu50. Over residues Asp51–Ile76 the composition is skewed to basic and acidic residues. The segment covering Ile106–Asn117 has biased composition (polar residues). One can recognise an ARID domain in the interval Asp202–Lys294. Positions Ser298–Pro369 are disordered. The span at Pro316–Pro325 shows a compositional bias: basic residues. In terms of domain architecture, REKLES spans Ala389–Arg479.

It localises to the nucleus. In terms of biological role, transcription factor involved in skeletogenesis and oral ectoderm patterning. The chain is Protein dead ringer homolog (dri) from Strongylocentrotus purpuratus (Purple sea urchin).